A 160-amino-acid polypeptide reads, in one-letter code: Ribosomal RNA large subunit methyltransferase H (160 aa).

Residues Leu-76, Gly-108, and 127-132 each bind S-adenosyl-L-methionine; that span reads LGKMTW.

This sequence belongs to the RNA methyltransferase RlmH family. Homodimer.

It localises to the cytoplasm. The catalysed reaction is pseudouridine(1915) in 23S rRNA + S-adenosyl-L-methionine = N(3)-methylpseudouridine(1915) in 23S rRNA + S-adenosyl-L-homocysteine + H(+). In terms of biological role, specifically methylates the pseudouridine at position 1915 (m3Psi1915) in 23S rRNA. The protein is Ribosomal RNA large subunit methyltransferase H of Rhizobium leguminosarum bv. trifolii (strain WSM2304).